Reading from the N-terminus, the 234-residue chain is Lipoprotein-releasing system ATP-binding protein LolD (234 aa).

Residues 7–233 (LQCINLCKRY…LQHHLTLVGA (227 aa)) form the ABC transporter domain. 43 to 50 (GSSGSGKS) serves as a coordination point for ATP.

This sequence belongs to the ABC transporter superfamily. Lipoprotein translocase (TC 3.A.1.125) family. In terms of assembly, the complex is composed of two ATP-binding proteins (LolD) and two transmembrane proteins (LolC and LolE).

The protein resides in the cell inner membrane. Its function is as follows. Part of the ABC transporter complex LolCDE involved in the translocation of mature outer membrane-directed lipoproteins, from the inner membrane to the periplasmic chaperone, LolA. Responsible for the formation of the LolA-lipoprotein complex in an ATP-dependent manner. The chain is Lipoprotein-releasing system ATP-binding protein LolD from Yersinia pestis bv. Antiqua (strain Antiqua).